Reading from the N-terminus, the 396-residue chain is Elongation factor Tu (396 aa).

A tr-type G domain is found at K11–E205. The G1 stretch occupies residues G20–T27. Position 20 to 27 (G20 to T27) interacts with GTP. Position 27 (T27) interacts with Mg(2+). A G2 region spans residues G61–N65. The segment at D82 to G85 is G3. GTP-binding positions include D82–H86 and N137–D140. The interval N137 to D140 is G4. The G5 stretch occupies residues S175–L177.

Belongs to the TRAFAC class translation factor GTPase superfamily. Classic translation factor GTPase family. EF-Tu/EF-1A subfamily. As to quaternary structure, monomer.

Its subcellular location is the cytoplasm. The catalysed reaction is GTP + H2O = GDP + phosphate + H(+). GTP hydrolase that promotes the GTP-dependent binding of aminoacyl-tRNA to the A-site of ribosomes during protein biosynthesis. The chain is Elongation factor Tu from Latilactobacillus sakei subsp. sakei (strain 23K) (Lactobacillus sakei subsp. sakei).